The following is a 66-amino-acid chain: U1-theraphotoxin-Cg1a 1 (66 aa).

Residues 1 to 21 form the signal peptide; that stretch reads MKTSALFVIFGLVLLFCNSFA. Positions 22–29 are excised as a propeptide; sequence AELKTTGR. Intrachain disulfides connect C31–C46, C38–C51, and C45–C58. A Proline amide modification is found at P63.

The protein belongs to the neurotoxin 10 (Hwtx-1) family. 46 (Jztx-7/10/12) subfamily. Expressed by the venom gland.

Its subcellular location is the secreted. Its function is as follows. Probable ion channel inhibitor. The protein is U1-theraphotoxin-Cg1a 1 of Chilobrachys guangxiensis (Chinese earth tiger tarantula).